A 130-amino-acid chain; its full sequence is Small ribosomal subunit protein uS9 (130 aa).

The interval 98–130 is disordered; it reads LKRAGLLTRDPRMKERKKPGLKKARRSPQFSKR. The segment covering 111–130 has biased composition (basic residues); it reads KERKKPGLKKARRSPQFSKR.

It belongs to the universal ribosomal protein uS9 family.

The sequence is that of Small ribosomal subunit protein uS9 (rpsI) from Staphylococcus carnosus (strain TM300).